A 198-amino-acid chain; its full sequence is Recombination protein RecR (198 aa).

Residues 57 to 72 (CAQCRTLTEHSLCEYC) form a C4-type zinc finger. One can recognise a Toprim domain in the interval 80–175 (SLLCIVESPA…RTTRIAHGIP (96 aa)).

It belongs to the RecR family.

Its function is as follows. May play a role in DNA repair. It seems to be involved in an RecBC-independent recombinational process of DNA repair. It may act with RecF and RecO. The sequence is that of Recombination protein RecR from Methylococcus capsulatus (strain ATCC 33009 / NCIMB 11132 / Bath).